The following is a 256-amino-acid chain: Imidazole glycerol phosphate synthase subunit HisF (256 aa).

Residues aspartate 11 and aspartate 130 contribute to the active site.

It belongs to the HisA/HisF family. Heterodimer of HisH and HisF.

It is found in the cytoplasm. The enzyme catalyses 5-[(5-phospho-1-deoxy-D-ribulos-1-ylimino)methylamino]-1-(5-phospho-beta-D-ribosyl)imidazole-4-carboxamide + L-glutamine = D-erythro-1-(imidazol-4-yl)glycerol 3-phosphate + 5-amino-1-(5-phospho-beta-D-ribosyl)imidazole-4-carboxamide + L-glutamate + H(+). It participates in amino-acid biosynthesis; L-histidine biosynthesis; L-histidine from 5-phospho-alpha-D-ribose 1-diphosphate: step 5/9. Functionally, IGPS catalyzes the conversion of PRFAR and glutamine to IGP, AICAR and glutamate. The HisF subunit catalyzes the cyclization activity that produces IGP and AICAR from PRFAR using the ammonia provided by the HisH subunit. The polypeptide is Imidazole glycerol phosphate synthase subunit HisF (Cupriavidus metallidurans (strain ATCC 43123 / DSM 2839 / NBRC 102507 / CH34) (Ralstonia metallidurans)).